A 126-amino-acid polypeptide reads, in one-letter code: Small ribosomal subunit protein uS13 (126 aa).

The disordered stretch occupies residues 92-126 (RMGLPVRGQRTRTNARTRRGGRRTVAGKKKAPAKK). Residues 100-126 (QRTRTNARTRRGGRRTVAGKKKAPAKK) are compositionally biased toward basic residues.

The protein belongs to the universal ribosomal protein uS13 family. As to quaternary structure, part of the 30S ribosomal subunit. Forms a loose heterodimer with protein S19. Forms two bridges to the 50S subunit in the 70S ribosome.

Located at the top of the head of the 30S subunit, it contacts several helices of the 16S rRNA. In the 70S ribosome it contacts the 23S rRNA (bridge B1a) and protein L5 of the 50S subunit (bridge B1b), connecting the 2 subunits; these bridges are implicated in subunit movement. Contacts the tRNAs in the A and P-sites. The chain is Small ribosomal subunit protein uS13 from Cyanothece sp. (strain PCC 7425 / ATCC 29141).